The sequence spans 430 residues: tRNA(Ile)-lysidine synthase (430 aa).

An ATP-binding site is contributed by 21–26 (SGGLDS).

The protein belongs to the tRNA(Ile)-lysidine synthase family.

The protein localises to the cytoplasm. It carries out the reaction cytidine(34) in tRNA(Ile2) + L-lysine + ATP = lysidine(34) in tRNA(Ile2) + AMP + diphosphate + H(+). Its function is as follows. Ligates lysine onto the cytidine present at position 34 of the AUA codon-specific tRNA(Ile) that contains the anticodon CAU, in an ATP-dependent manner. Cytidine is converted to lysidine, thus changing the amino acid specificity of the tRNA from methionine to isoleucine. The protein is tRNA(Ile)-lysidine synthase of Salmonella newport (strain SL254).